Consider the following 373-residue polypeptide: Probable pectin lyase D (373 aa).

Positions 1–24 are cleaved as a signal peptide; sequence MKYAAALTAVAALAARAAAVGVSG. Intrachain disulfides connect C82/C101 and C91/C225. N-linked (GlcNAc...) asparagine glycosylation is present at N128. The active site involves R255. A glycan (N-linked (GlcNAc...) asparagine) is linked at N274. The cysteines at positions 321 and 329 are disulfide-linked. N348 carries an N-linked (GlcNAc...) asparagine glycan. Low complexity predominate over residues 354–366; it reads LPSADAASTSPAS. Residues 354 to 373 are disordered; the sequence is LPSADAASTSPASNAGQGNL.

Belongs to the polysaccharide lyase 1 family.

The protein localises to the secreted. The catalysed reaction is Eliminative cleavage of (1-&gt;4)-alpha-D-galacturonan methyl ester to give oligosaccharides with 4-deoxy-6-O-methyl-alpha-D-galact-4-enuronosyl groups at their non-reducing ends.. Its function is as follows. Pectinolytic enzymes consist of four classes of enzymes: pectin lyase, polygalacturonase, pectin methylesterase and rhamnogalacturonase. Among pectinolytic enzymes, pectin lyase is the most important in depolymerization of pectin, since it cleaves internal glycosidic bonds of highly methylated pectins. In Aspergillus niger (strain ATCC MYA-4892 / CBS 513.88 / FGSC A1513), this protein is Probable pectin lyase D (pelD).